The following is a 163-amino-acid chain: Crossover junction endodeoxyribonuclease RuvC (163 aa).

Active-site residues include Asp-8, Glu-68, and Asp-140. Residues Asp-8, Glu-68, and Asp-140 each contribute to the Mg(2+) site.

Belongs to the RuvC family. In terms of assembly, homodimer which binds Holliday junction (HJ) DNA. The HJ becomes 2-fold symmetrical on binding to RuvC with unstacked arms; it has a different conformation from HJ DNA in complex with RuvA. In the full resolvosome a probable DNA-RuvA(4)-RuvB(12)-RuvC(2) complex forms which resolves the HJ. Mg(2+) is required as a cofactor.

The protein resides in the cytoplasm. The enzyme catalyses Endonucleolytic cleavage at a junction such as a reciprocal single-stranded crossover between two homologous DNA duplexes (Holliday junction).. The RuvA-RuvB-RuvC complex processes Holliday junction (HJ) DNA during genetic recombination and DNA repair. Endonuclease that resolves HJ intermediates. Cleaves cruciform DNA by making single-stranded nicks across the HJ at symmetrical positions within the homologous arms, yielding a 5'-phosphate and a 3'-hydroxyl group; requires a central core of homology in the junction. The consensus cleavage sequence is 5'-(A/T)TT(C/G)-3'. Cleavage occurs on the 3'-side of the TT dinucleotide at the point of strand exchange. HJ branch migration catalyzed by RuvA-RuvB allows RuvC to scan DNA until it finds its consensus sequence, where it cleaves and resolves the cruciform DNA. This chain is Crossover junction endodeoxyribonuclease RuvC, found in Erythrobacter litoralis (strain HTCC2594).